We begin with the raw amino-acid sequence, 521 residues long: Probable glycine dehydrogenase (decarboxylating) subunit 2 (521 aa).

Lys-279 carries the N6-(pyridoxal phosphate)lysine modification.

The protein belongs to the GcvP family. C-terminal subunit subfamily. As to quaternary structure, the glycine cleavage system is composed of four proteins: P, T, L and H. In this organism, the P 'protein' is a heterodimer of two subunits. Pyridoxal 5'-phosphate is required as a cofactor.

The enzyme catalyses N(6)-[(R)-lipoyl]-L-lysyl-[glycine-cleavage complex H protein] + glycine + H(+) = N(6)-[(R)-S(8)-aminomethyldihydrolipoyl]-L-lysyl-[glycine-cleavage complex H protein] + CO2. The glycine cleavage system catalyzes the degradation of glycine. The P protein binds the alpha-amino group of glycine through its pyridoxal phosphate cofactor; CO(2) is released and the remaining methylamine moiety is then transferred to the lipoamide cofactor of the H protein. This is Probable glycine dehydrogenase (decarboxylating) subunit 2 from Staphylothermus marinus (strain ATCC 43588 / DSM 3639 / JCM 9404 / F1).